We begin with the raw amino-acid sequence, 276 residues long: ATP synthase subunit delta (276 aa).

Belongs to the ATPase delta chain family. In terms of assembly, F-type ATPases have 2 components, F(1) - the catalytic core - and F(0) - the membrane proton channel. F(1) has five subunits: alpha(3), beta(3), gamma(1), delta(1), epsilon(1). F(0) has three main subunits: a(1), b(2) and c(10-14). The alpha and beta chains form an alternating ring which encloses part of the gamma chain. F(1) is attached to F(0) by a central stalk formed by the gamma and epsilon chains, while a peripheral stalk is formed by the delta and b chains.

The protein resides in the cell membrane. Its function is as follows. F(1)F(0) ATP synthase produces ATP from ADP in the presence of a proton or sodium gradient. F-type ATPases consist of two structural domains, F(1) containing the extramembraneous catalytic core and F(0) containing the membrane proton channel, linked together by a central stalk and a peripheral stalk. During catalysis, ATP synthesis in the catalytic domain of F(1) is coupled via a rotary mechanism of the central stalk subunits to proton translocation. Functionally, this protein is part of the stalk that links CF(0) to CF(1). It either transmits conformational changes from CF(0) to CF(1) or is implicated in proton conduction. In Frankia casuarinae (strain DSM 45818 / CECT 9043 / HFP020203 / CcI3), this protein is ATP synthase subunit delta.